The sequence spans 395 residues: Putative transcription factor 079L (395 aa).

This sequence belongs to the IIV-6 282R family.

Functionally, transcription activation. The sequence is that of Putative transcription factor 079L from Aedes vexans (Inland floodwater mosquito).